The sequence spans 456 residues: MEKLWGGRFQGKSEAWIDDFGASISFDQKMAKEDLAGSLAHVAMLSKCGIIPASEAAEITAGLKILQEKLALGELEFSTVNEDIHLNIEKLLHEEIGPVAGKLHTARSRNDQVATDMHLYLKQAVAEIIQSLKHLRVVLVQKAELHVETIMPGYTHLQHAQPLSFAHHLLAYFGMFTRDLERLEESVKRIDISPLGSAALAGTTFPIDRAYSAELLGFSAVYENSLDGVSDRDFIIEFLSNSSILMMHLSRFCEELILWTSHEFQFVELTDAFSTGSSIMPQKKNPDMAELIRGKTGRVYGNLFGMLTVLKGLPLAYNKDLQEDKEGMFDTLETVQTSLDIFAGMIETMKVNTEIMEESTQKDFSNATELADYLAKKGVPFREAHEIVGKLVLECTQNGIYLQDVALSHYQEINPLIEDDIYVVLSSKTAVQKRNSYGGTGFDQIKVALENTKKTL.

It belongs to the lyase 1 family. Argininosuccinate lyase subfamily.

It is found in the cytoplasm. The catalysed reaction is 2-(N(omega)-L-arginino)succinate = fumarate + L-arginine. The protein operates within amino-acid biosynthesis; L-arginine biosynthesis; L-arginine from L-ornithine and carbamoyl phosphate: step 3/3. The polypeptide is Argininosuccinate lyase (Listeria monocytogenes serotype 4a (strain HCC23)).